A 245-amino-acid chain; its full sequence is tRNA pseudouridine synthase A (245 aa).

Asp52 functions as the Nucleophile in the catalytic mechanism. Tyr111 contributes to the substrate binding site.

It belongs to the tRNA pseudouridine synthase TruA family. Homodimer.

The enzyme catalyses uridine(38/39/40) in tRNA = pseudouridine(38/39/40) in tRNA. Formation of pseudouridine at positions 38, 39 and 40 in the anticodon stem and loop of transfer RNAs. The chain is tRNA pseudouridine synthase A from Thermotoga neapolitana (strain ATCC 49049 / DSM 4359 / NBRC 107923 / NS-E).